A 271-amino-acid polypeptide reads, in one-letter code: Mannosyl-3-phosphoglycerate phosphatase (271 aa).

Aspartate 13 functions as the Nucleophile in the catalytic mechanism. Mg(2+) contacts are provided by aspartate 13, aspartate 15, and aspartate 214.

Belongs to the HAD-like hydrolase superfamily. MPGP family. Mg(2+) serves as cofactor.

It is found in the cytoplasm. It carries out the reaction 2-O-(alpha-D-mannosyl)-3-phosphoglycerate + H2O = (2R)-2-O-(alpha-D-mannosyl)-glycerate + phosphate. The polypeptide is Mannosyl-3-phosphoglycerate phosphatase (yedP) (Escherichia coli O6:K15:H31 (strain 536 / UPEC)).